Here is a 197-residue protein sequence, read N- to C-terminus: Adenylate kinase (197 aa).

12–17 (GSGKTT) contributes to the ATP binding site. The interval 34-63 (STGDMLREEVASGSELGKTIESYIAKGALV) is NMP. Residues threonine 35, arginine 40, 61–63 (ALV), 88–91 (GYPR), and glutamine 95 each bind AMP. The interval 130 to 144 (GRRAEAAPGEERSDD) is LID. Arginine 131 contacts ATP. Positions 141 and 152 each coordinate AMP. Residue arginine 180 participates in ATP binding.

This sequence belongs to the adenylate kinase family. In terms of assembly, monomer.

Its subcellular location is the cytoplasm. The enzyme catalyses AMP + ATP = 2 ADP. It functions in the pathway purine metabolism; AMP biosynthesis via salvage pathway; AMP from ADP: step 1/1. Catalyzes the reversible transfer of the terminal phosphate group between ATP and AMP. Plays an important role in cellular energy homeostasis and in adenine nucleotide metabolism. The polypeptide is Adenylate kinase (Sulfurovum sp. (strain NBC37-1)).